The primary structure comprises 518 residues: Glutamate--cysteine ligase (518 aa).

The protein belongs to the glutamate--cysteine ligase type 1 family. Type 1 subfamily.

It carries out the reaction L-cysteine + L-glutamate + ATP = gamma-L-glutamyl-L-cysteine + ADP + phosphate + H(+). It functions in the pathway sulfur metabolism; glutathione biosynthesis; glutathione from L-cysteine and L-glutamate: step 1/2. This is Glutamate--cysteine ligase from Escherichia fergusonii (strain ATCC 35469 / DSM 13698 / CCUG 18766 / IAM 14443 / JCM 21226 / LMG 7866 / NBRC 102419 / NCTC 12128 / CDC 0568-73).